Consider the following 595-residue polypeptide: Protein UL31 (595 aa).

A signal peptide spans 1-23; the sequence is MGDKPTLVTLLTVAVSSPPPSSP. Positions 47–94 are disordered; the sequence is TATSEVGEKTAEQEVAAADPETGNERRENRENEGGETRTTGTTAVKRS. Residues 69-82 are compositionally biased toward basic and acidic residues; sequence GNERRENRENEGGE. 2 N-linked (GlcNAc...) asparagine; by host glycosylation sites follow: Asn176 and Asn197.

This sequence belongs to the herpesviridae U10 family. In terms of assembly, interacts with host CGAS.

The protein resides in the host cytoplasm. It is found in the host nucleus. In terms of biological role, plays a role in the inhibition of host innate immune system by targeting host CGAS and promoting dissociation of DNA from CGAS, thereby inhibiting the enzymatic activity of CGAS. The chain is Protein UL31 from Homo sapiens (Human).